A 725-amino-acid chain; its full sequence is MRLSRIGTPKVSVTRVIPVRNVVIARRKPVRASNTDAKTWLMKEEQRRIRQKEQEMKQRLEELERFKTKVQKSYIRKEDRHLAQEIEKDLDIITDDYNLDSDVDLVFGELMQAEEQPKSLKSLPGASDASDNTDKSVELFSFPSPNLTLPEKVIHHIGPLVKHISNPENIQWGRLLLDLEKNQGFNGLSAVDVTRLIQNIPKEEKYQHMSLIHEMMFNSGISPDRYLTDLMMTAFSERSYYEPLVEALFQDYDINGWAPTDYTFGALIKVYSKGKKLDKINNLLNQMKLKYHKEPNKKIYTMVLQTCMKIDDYKKTSEVFDAMKFNSVATNPDTTAYGSMILMHVLNDNVEAALDLYDNLETEPDETILLALARGCSSRKVLINRGWDFIIEYYKRKFPLNEKLMTVMMYLTSRDGDLSLTRAIYNTIHESRFKMTESFSMNKNDGIALNVLLRGYFKYPDNHTVQSKTNDAVVALRRSTLALNHFGYHPKATPFLPVNELEEKHILPEVQAIWSYIILHYPDIVTSELVGTYLMILATRGSMADFNKAFEELTLKPVFEQVDNAVAVEEESEQSSELSDLRLTPLAIRLSSNIQIKYPRNHDIYHIALQACINNKDIELGQRIWQERGRFRKTPEFSMQPRNVKHNQDFEFARDMLKLLVNCNELNDACRLLLSTETQFNWEWTYVKPVYIMAEQLGDEYAKKVVRRVVRNKKSKWREEYLQGM.

A mitochondrion-targeting transit peptide spans 1–21 (MRLSRIGTPKVSVTRVIPVRN). 7 PPR repeats span residues 189 to 223 (SAVD…GISP), 224 to 259 (DRYL…GWAP), 260 to 290 (TDYT…MKLK), 296 to 330 (NKKI…SVAT), 333 to 363 (DTTA…LETE), 401 to 435 (NEKL…RFKM), and 601 to 635 (NHDI…RKTP).

This sequence belongs to the CCM1 family. Binds to mitochondrial small subunit 15S rRNA.

The protein resides in the mitochondrion. Its function is as follows. Regulates mitochondrial small subunit maturation by controlling 15S rRNA 5'-end processing. Localizes to the 5' precursor of the 15S rRNA in a position that is subsequently occupied by mS47 in the mature yeast mtSSU. Uses structure and sequence-specific RNA recognition, binding to a single-stranded region of the precursor and specifically recognizing bases -6 to -1. The exchange of Ccm1 for mS47 is coupled to the irreversible removal of precursor rRNA that is accompanied by conformational changes of the mitoribosomal proteins uS5m and mS26. These conformational changes signal completion of 5'-end rRNA processing through protection of the mature 5'-end of the 15S rRNA and stabilization of mS47. The removal of the 5' precursor together with the dissociation of Ccm1 may be catalyzed by the 5'-3' exoribonuclease Pet127. Involved in the specific removal of group I introns in mitochondrial encoded transcripts. In Komagataella phaffii (strain GS115 / ATCC 20864) (Yeast), this protein is Mitochondrial 15S rRNA processing factor CCM1 (CCM1).